A 79-amino-acid polypeptide reads, in one-letter code: Mycoredoxin 1 (79 aa).

Positions 1–79 (MSNVTIYATD…EVIAKIEALA (79 aa)) constitute a Glutaredoxin domain.

Belongs to the glutaredoxin family.

The protein localises to the cytoplasm. It catalyses the reaction [mycoredoxin]-L-cysteine + arseno-mycothiol + H(+) = [mycoredoxin]-S-mycothiol-L-cysteine + arsenite. Its function is as follows. Involved in defense against toxic arsenate. Involved in the mycothiol/myoredoxin redox pathway which uses a mycothioltransferase mechanism; functions as a monothiol mixed disulfide reductase and is recycled by a second mycothiol forming mycothione which in turn is reduced in a NADPH-dependent manner. This chain is Mycoredoxin 1 (mrx1), found in Corynebacterium glutamicum (strain ATCC 13032 / K051).